The following is a 139-amino-acid chain: Large ribosomal subunit protein bL17 (139 aa).

The protein belongs to the bacterial ribosomal protein bL17 family. As to quaternary structure, part of the 50S ribosomal subunit. Contacts protein L32.

This is Large ribosomal subunit protein bL17 from Cereibacter sphaeroides (strain ATCC 17025 / ATH 2.4.3) (Rhodobacter sphaeroides).